A 93-amino-acid chain; its full sequence is Large ribosomal subunit protein bL31B (93 aa).

The protein belongs to the bacterial ribosomal protein bL31 family. Type B subfamily. Part of the 50S ribosomal subunit.

This is Large ribosomal subunit protein bL31B from Pseudomonas syringae pv. tomato (strain ATCC BAA-871 / DC3000).